We begin with the raw amino-acid sequence, 718 residues long: Peroxisomal bifunctional enzyme (718 aa).

Residues M1–S280 are enoyl-CoA hydratase / isomerase. The residue at position 38 (K38) is an N6-succinyllysine. G99 is a substrate binding site. Residues K163 and K172 each carry the N6-acetyllysine; alternate modification. Residues K163 and K172 each carry the N6-succinyllysine; alternate modification. Position 181 is an N6-succinyllysine (K181). Residues K189 and K217 each carry the N6-acetyllysine; alternate modification. Residues K189 and K217 each carry the N6-succinyllysine; alternate modification. K240 carries the N6-succinyllysine modification. K248 is subject to N6-acetyllysine. K252 carries the N6-succinyllysine modification. K274 bears the N6-acetyllysine; alternate mark. K274 carries the N6-succinyllysine; alternate modification. Residues K278, K288, and K329 each carry the N6-succinyllysine modification. Residues T281–G567 are 3-hydroxyacyl-CoA dehydrogenase. K344, K348, K355, and K459 each carry N6-acetyllysine. Position 527 is an N6-succinyllysine (K527). T543 is modified (phosphothreonine). K572 carries the post-translational modification N6-succinyllysine. K579, K586, and K705 each carry N6-acetyllysine; alternate. 3 positions are modified to N6-succinyllysine; alternate: K579, K586, and K705. The Microbody targeting signal signature appears at S716–L718. K717 bears the N6-succinyllysine mark.

This sequence in the N-terminal section; belongs to the enoyl-CoA hydratase/isomerase family. The protein in the C-terminal section; belongs to the 3-hydroxyacyl-CoA dehydrogenase family. As to quaternary structure, monomer. In terms of processing, acetylated, leading to enhanced enzyme activity. Acetylation is enhanced by up to 80% after treatment either with trichostin A (TCA) or with nicotinamide (NAM) with highest increase on Lys-344. Acetylation and enzyme activity increased by about 1.5% on addition of fatty acids.

The protein localises to the peroxisome. It catalyses the reaction a (3S)-3-hydroxyacyl-CoA = a (2E)-enoyl-CoA + H2O. The catalysed reaction is a 4-saturated-(3S)-3-hydroxyacyl-CoA = a (3E)-enoyl-CoA + H2O. The enzyme catalyses a (3Z)-enoyl-CoA = a 4-saturated (2E)-enoyl-CoA. It carries out the reaction a (3E)-enoyl-CoA = a 4-saturated (2E)-enoyl-CoA. It catalyses the reaction a (3S)-3-hydroxyacyl-CoA + NAD(+) = a 3-oxoacyl-CoA + NADH + H(+). The catalysed reaction is (2S,3S)-3-hydroxy-2-methylbutanoyl-CoA = (2E)-2-methylbut-2-enoyl-CoA + H2O. The enzyme catalyses (2E)-dodecenedioyl-CoA + H2O = (3S)-hydroxydodecanedioyl-CoA. It carries out the reaction (3S)-hydroxydodecanedioyl-CoA + NAD(+) = 3-oxododecanedioyl-CoA + NADH + H(+). It catalyses the reaction (2E)-octenedioyl-CoA + H2O = (3S)-hydroxyoctanedioyl-CoA. The catalysed reaction is (3S)-hydroxyoctanedioyl-CoA + NAD(+) = 3-oxooctanedioyl-CoA + NADH + H(+). The enzyme catalyses (2E)-decenedioyl-CoA + H2O = (3S)-hydroxydecanedioyl-CoA. It carries out the reaction (3S)-hydroxydecanedioyl-CoA + NAD(+) = 3-oxodecanedioyl-CoA + NADH + H(+). It catalyses the reaction (2E)-tetradecenedioyl-CoA + H2O = (3S)-hydroxytetradecanedioyl-CoA. The catalysed reaction is (3S)-hydroxytetradecanedioyl-CoA + NAD(+) = 3-oxotetradecanedioyl-CoA + NADH + H(+). The enzyme catalyses (3E,5Z)-tetradecadienoyl-CoA = (2E,5Z)-tetradecadienoyl-CoA. It carries out the reaction (3E,5Z)-octadienoyl-CoA = (2E,5Z)-octadienoyl-CoA. It catalyses the reaction (3S)-hydroxydecanoyl-CoA + NAD(+) = 3-oxodecanoyl-CoA + NADH + H(+). The catalysed reaction is (3E)-decenoyl-CoA = (2E)-decenoyl-CoA. The enzyme catalyses (3Z)-hexenoyl-CoA = (2E)-hexenoyl-CoA. It carries out the reaction (3E)-hexenoyl-CoA = (2E)-hexenoyl-CoA. It catalyses the reaction (3S)-hydroxydecanoyl-CoA = (2E)-decenoyl-CoA + H2O. The catalysed reaction is (3S)-hydroxyhexanoyl-CoA = (2E)-hexenoyl-CoA + H2O. The enzyme catalyses (3S)-hydroxyhexadecanoyl-CoA + NAD(+) = 3-oxohexadecanoyl-CoA + NADH + H(+). It carries out the reaction (3S)-hydroxyhexadecanoyl-CoA = (2E)-hexadecenoyl-CoA + H2O. It catalyses the reaction (2E)-hexadecenedioyl-CoA + H2O = (3S)-hydroxyhexadecanedioyl-CoA. The catalysed reaction is (3S)-hydroxyhexadecanedioyl-CoA + NAD(+) = 3-oxohexadecanedioyl-CoA + NADH + H(+). It functions in the pathway lipid metabolism; fatty acid beta-oxidation. Enzyme activity enhanced by acetylation. Peroxisomal trifunctional enzyme possessing 2-enoyl-CoA hydratase, 3-hydroxyacyl-CoA dehydrogenase, and delta 3, delta 2-enoyl-CoA isomerase activities. Catalyzes two of the four reactions of the long chain fatty acids peroxisomal beta-oxidation pathway. Can also use branched-chain fatty acids such as 2-methyl-2E-butenoyl-CoA as a substrate, which is hydrated into (2S,3S)-3-hydroxy-2-methylbutanoyl-CoA. Optimal isomerase for 2,5 double bonds into 3,5 form isomerization in a range of enoyl-CoA species. Also able to isomerize both 3-cis and 3-trans double bonds into the 2-trans form in a range of enoyl-CoA species. With HSD17B4, catalyzes the hydration of trans-2-enoyl-CoA and the dehydrogenation of 3-hydroxyacyl-CoA, but with opposite chiral specificity. Regulates the amount of medium-chain dicarboxylic fatty acids which are essential regulators of all fatty acid oxidation pathways. Also involved in the degradation of long-chain dicarboxylic acids through peroxisomal beta-oxidation. The chain is Peroxisomal bifunctional enzyme from Mus musculus (Mouse).